A 181-amino-acid polypeptide reads, in one-letter code: NADH-quinone oxidoreductase subunit I (181 aa).

4Fe-4S ferredoxin-type domains lie at 51–80 (TRNS…LKKS) and 90–119 (KSFQ…LTPD). Residues Cys60, Cys63, Cys66, Cys70, Cys99, Cys102, Cys105, and Cys109 each contribute to the [4Fe-4S] cluster site.

This sequence belongs to the complex I 23 kDa subunit family. NDH-1 is composed of 13 different subunits. Subunits NuoA, H, J, K, L, M, N constitute the membrane sector of the complex. It depends on [4Fe-4S] cluster as a cofactor.

The protein resides in the cell membrane. It carries out the reaction a quinone + NADH + 5 H(+)(in) = a quinol + NAD(+) + 4 H(+)(out). Functionally, NDH-1 shuttles electrons from NADH, via FMN and iron-sulfur (Fe-S) centers, to quinones in the respiratory chain. The immediate electron acceptor for the enzyme in this species is believed to be ubiquinone. Couples the redox reaction to proton translocation (for every two electrons transferred, four hydrogen ions are translocated across the cytoplasmic membrane), and thus conserves the redox energy in a proton gradient. In Buchnera aphidicola subsp. Cinara cedri (strain Cc), this protein is NADH-quinone oxidoreductase subunit I.